A 405-amino-acid chain; its full sequence is MDTIFLWSLLLLFFGSQASRCSAQKNTEFAVDLYQEVSLSHKDNIIFSPLGITLVLEMVQLGAKGKAQQQIRQTLKQQETSAGEEFFVLKSFFSAISEKKQEFTFNLANALYLQEGFTVKEQYLHGNKEFFQSAIKLVDFQDAKACAEMISTWVERKTDGKIKDMFSGEEFGPLTRLVLVNAIYFKGDWKQKFRKEDTQLINFTKKNGSTVKIPMMKALLRTKYGYFSESSLNYQVLELSYKGDEFSLIIILPAEGMDIEEVEKLITAQQILKWLSEMQEEEVEISLPRFKVEQKVDFKDVLYSLNITEIFSGGCDLSGITDSSEVYVSQVTQKVFFEINEDGSEAATSTGIHIPVIMSLAQSQFIANHPFLFIMKHNPTESILFMGRVTNPDTQEIKGRDLDSL.

The N-terminal stretch at 1–18 is a signal peptide; it reads MDTIFLWSLLLLFFGSQA. N-linked (GlcNAc...) asparagine glycans are attached at residues N202, N207, and N306.

It belongs to the serpin family. Expressed in pancreas and adipose tissues.

It localises to the secreted. This Homo sapiens (Human) protein is Serpin I2 (SERPINI2).